The chain runs to 33 residues: Photosystem II reaction center protein Psb30 (33 aa).

Residues 5–25 traverse the membrane as a helical segment; sequence LIAQLTFLTSIIVSGPLVIAL.

The protein belongs to the Psb30/Ycf12 family. As to quaternary structure, PSII is composed of 1 copy each of membrane proteins PsbA, PsbB, PsbC, PsbD, PsbE, PsbF, PsbH, PsbI, PsbJ, PsbK, PsbL, PsbM, PsbT, PsbX, PsbY, PsbZ, Psb30/Ycf12, peripheral proteins of the oxygen-evolving complex and a large number of cofactors. It forms dimeric complexes.

It is found in the plastid. The protein localises to the chloroplast thylakoid membrane. Its function is as follows. A core subunit of photosystem II (PSII), probably helps stabilize the reaction center. This Psilotum nudum (Whisk fern) protein is Photosystem II reaction center protein Psb30.